Here is a 342-residue protein sequence, read N- to C-terminus: Trans-3-hydroxy-L-proline dehydratase (342 aa).

The Proton acceptor role is filled by S90. Residues 91-92 (GS), D251, and 256-257 (GT) each bind substrate.

Belongs to the proline racemase family.

The catalysed reaction is trans-3-hydroxy-L-proline = 1-pyrroline-2-carboxylate + H2O. In terms of biological role, catalyzes the dehydration of trans-3-hydroxy-L-proline (t3LHyp) to Delta(1)-pyrroline-2-carboxylate (Pyr2C). Is likely involved in a degradation pathway that converts t3LHyp to L-proline, which would allow P.denitrificans to grow on t3LHyp as a sole carbon source. Displays neither proline racemase activity nor 4-hydroxyproline 2-epimerase activity. This Paracoccus denitrificans (strain Pd 1222) protein is Trans-3-hydroxy-L-proline dehydratase.